Consider the following 125-residue polypeptide: Holo-[acyl-carrier-protein] synthase (125 aa).

Residues Asp-8 and Glu-57 each contribute to the Mg(2+) site.

It belongs to the P-Pant transferase superfamily. AcpS family. It depends on Mg(2+) as a cofactor.

It localises to the cytoplasm. It catalyses the reaction apo-[ACP] + CoA = holo-[ACP] + adenosine 3',5'-bisphosphate + H(+). Its function is as follows. Transfers the 4'-phosphopantetheine moiety from coenzyme A to a Ser of acyl-carrier-protein. The chain is Holo-[acyl-carrier-protein] synthase from Natranaerobius thermophilus (strain ATCC BAA-1301 / DSM 18059 / JW/NM-WN-LF).